Consider the following 146-residue polypeptide: Large ribosomal subunit protein uL15 (146 aa).

Residues 1–58 are disordered; that stretch reads MKLNELSPPKGARTARKRKGRGPGSGLGKTAGKGHKGQKARSGGGVRPGFEGGQMPVH. 2 stretches are compositionally biased toward gly residues: residues 22–31 and 42–52; these read GPGSGLGKTA and SGGGVRPGFEG.

It belongs to the universal ribosomal protein uL15 family. Part of the 50S ribosomal subunit.

In terms of biological role, binds to the 23S rRNA. The protein is Large ribosomal subunit protein uL15 of Desulfatibacillum aliphaticivorans.